Here is a 30-residue protein sequence, read N- to C-terminus: Cyclotide cter-H (30 aa).

A cross-link (cyclopeptide (Gly-Asp)) is located at residues glycine 1 to aspartate 30. Disulfide bonds link cysteine 4-cysteine 20, cysteine 8-cysteine 22, and cysteine 13-cysteine 27.

In terms of processing, contains 3 disulfide bonds. Post-translationally, this is a cyclic peptide.

Probably participates in a plant defense mechanism. This chain is Cyclotide cter-H, found in Clitoria ternatea (Butterfly pea).